The following is a 316-amino-acid chain: Protoheme IX farnesyltransferase (316 aa).

9 helical membrane passes run 32–52 (VMSL…GHIH), 53–73 (PVLG…SGAL), 93–113 (IPAG…LSGF), 116–136 (VILG…TIFF), 152–172 (NIVI…ACVT), 180–200 (TVLF…LALF), 221–241 (VTKH…ILPS), 252–271 (LVAA…VWRM), and 289–309 (IFYL…SIFV).

Belongs to the UbiA prenyltransferase family. Protoheme IX farnesyltransferase subfamily.

Its subcellular location is the cell inner membrane. It carries out the reaction heme b + (2E,6E)-farnesyl diphosphate + H2O = Fe(II)-heme o + diphosphate. It functions in the pathway porphyrin-containing compound metabolism; heme O biosynthesis; heme O from protoheme: step 1/1. Converts heme B (protoheme IX) to heme O by substitution of the vinyl group on carbon 2 of heme B porphyrin ring with a hydroxyethyl farnesyl side group. The protein is Protoheme IX farnesyltransferase of Rhizobium leguminosarum bv. trifolii (strain WSM2304).